The chain runs to 347 residues: NADH-ubiquinone oxidoreductase chain 2 (347 aa).

The next 11 helical transmembrane spans lie at 1 to 21 (MNPL…AIVM), 25 to 45 (HWLT…PMLM), 59 to 79 (YFLT…MNLT), 96 to 116 (IIMT…FWVP), 127 to 147 (CLIL…MISP), 149 to 169 (INLN…GWGG), 178 to 198 (IMAY…AYNP), 200 to 220 (MTML…MLLI), 247 to 267 (IMLS…WMII), 276 to 296 (IIMP…YMRL), and 325 to 345 (LLSP…MMSL).

This sequence belongs to the complex I subunit 2 family. Core subunit of respiratory chain NADH dehydrogenase (Complex I) which is composed of 45 different subunits. Interacts with TMEM242.

The protein resides in the mitochondrion inner membrane. It catalyses the reaction a ubiquinone + NADH + 5 H(+)(in) = a ubiquinol + NAD(+) + 4 H(+)(out). Core subunit of the mitochondrial membrane respiratory chain NADH dehydrogenase (Complex I) which catalyzes electron transfer from NADH through the respiratory chain, using ubiquinone as an electron acceptor. Essential for the catalytic activity and assembly of complex I. This chain is NADH-ubiquinone oxidoreductase chain 2, found in Natalus stramineus (Mexican funnel-eared bat).